The following is a 434-amino-acid chain: Alpha-enolase (434 aa).

Ser-40 serves as a coordination point for Mg(2+). Positions 158 and 167 each coordinate substrate. Glu-210 acts as the Proton donor in catalysis. Mg(2+) is bound by residues Asp-245, Glu-293, and Asp-318. Residues Glu-293 and Asp-318 each contribute to the substrate site. Lys-343 serves as the catalytic Proton acceptor. Substrate-binding positions include 370-373 and Lys-394; that span reads SHRS.

The protein belongs to the enolase family. Homodimer. Mg(2+) is required as a cofactor.

It is found in the cytoplasm. It catalyses the reaction (2R)-2-phosphoglycerate = phosphoenolpyruvate + H2O. Its pathway is carbohydrate degradation; glycolysis; pyruvate from D-glyceraldehyde 3-phosphate: step 4/5. The sequence is that of Alpha-enolase from Sceloporus undulatus (Eastern fence lizard).